We begin with the raw amino-acid sequence, 386 residues long: MESSEPEPTEDASMDAFLEKFQSQPYRGGFREDQWEEEFDKIPLFMKKAPSEIDPEEFPDLACLQSMIFDDDRYPEEQAKTYKDEGNDYFKEKDYKKAVLSYSEGLKKKCADPDLNAVLYTNRAAAQYYLGNVRSSLNDVLAAKKLKPGHLKAIIRGALCHLELKHFAEAVNWCDEGLQIDAKEKKLLEIRAKADKLKRMEERDLRKAKLKEKKEQHQNEALLQAIKARNIRLVSESAGEDEDSASNGPAEILLDGLSSENPYGARLSIDDQGRLSWPVLFLYPEYAQSDFISAFHEDTRFIDHLMAMFSEAPSWDSEHKYHPENLEVYFEDEDRAELYQVSPDSTLLQVLQHPRCCVKALTPAFLVCVGSSPFCRNYLQGKKVHR.

Met-1 is modified (N-acetylmethionine). Ser-51 carries the phosphoserine modification. TPR repeat units follow at residues 79–112, 117–150, and 151–184; these read AKTYKDEGNDYFKEKDYKKAVLSYSEGLKKKCAD, AVLYTNRAAAQYYLGNVRSSLNDVLAAKKLKPGH, and LKAIIRGALCHLELKHFAEAVNWCDEGLQIDAKE. Residue Ser-244 is modified to Phosphoserine.

This sequence belongs to the TTC4 family. In terms of assembly, interacts (via TPR repeats) with HSP90AB1. Interacts with HSPA8, CDC6 and TBK1. Interacts with isoform 1 and isoform 3 of MSL1. As to expression, expressed at high levels in the heart, testis, kidney, brain and tongue. Expressed at low levels in the stomach, lung and liver.

The protein resides in the nucleus. The protein localises to the nucleoplasm. Its subcellular location is the cytoplasm. Its function is as follows. May act as a co-chaperone for HSP90AB1. This is Tetratricopeptide repeat protein 4 (Ttc4) from Mus musculus (Mouse).